The sequence spans 154 residues: Pro-corazonin (154 aa).

A signal peptide spans 1 to 19; the sequence is MLRLLLLPLFLFTLSMCMG. At glutamine 20 the chain carries Pyrrolidone carboxylic acid. Asparagine 30 bears the Asparagine amide mark. Positions 70–154 are excised as a propeptide; it reads LERCLSQLQR…SAEPNVFGKH (85 aa).

This sequence belongs to the corazonin family. In terms of tissue distribution, expression is restricted to 24 neurons in the larval CNS (8 in the brain and 16 in the ventral nerve cord) and 12-16 neurons in the pars lateralis of the adult brain.

Its subcellular location is the secreted. Its function is as follows. Cardioactive peptide. Corazonin is probably involved in the physiological regulation of the heart beat. Clock (Clk) and cycle (cyc) proteins negatively regulate Crz transcription in a cell-specific manner. In Drosophila erecta (Fruit fly), this protein is Pro-corazonin (Crz).